Here is a 540-residue protein sequence, read N- to C-terminus: MDCKVVSLNEKDQFIPKIKSSDPVITGLFQYDAAQQTSFEKRMSKENNGREAALANVIREYMSDLKLSKLSSEQELNIQHLANGSKVVIGGQQAGLFGGPLYTFHKIFSIITLSKELTDTHKQQVVPVFWIAGEDHDFDEVNHTFVYNENHGSLHKVKYHTMEMPETTVSRYYPDKAELKQTLKTMFIHMKETVHTQGLLEICDRIIDQYDSWTDMFKALLHETFKAYGVLFIDAQFEPLRKMEAPMFKKILKKHQLLDDAFRATQQRTQNQGLNAMIQTDTNVHLFLHDENMRQLVSYDGKHFKLNKTDKTYIKEEIINIAENQPELFSNNVVTRPLMEEWLFNTVAFVGGPSEIKYWAELKDVFELFDVEMPIVMPRLRITYLNDRIEKLLSKYNIPLEKVLVDGVEGERSKFIREQASHQFIEKVEGMIEQQRRLNKDLLDEVAGNQNNINLVNKNNEIHIQQYDYLLKRYLLNIERENDISMKQFREIQETLHPMGGLQERIWNPLQILNDFGTDVFKPSTYPPLSYTFDHIIIKP.

A coiled-coil region spans residues 425–453 (IEKVEGMIEQQRRLNKDLLDEVAGNQNNI).

It belongs to the BshC family.

In terms of biological role, involved in bacillithiol (BSH) biosynthesis. May catalyze the last step of the pathway, the addition of cysteine to glucosamine malate (GlcN-Mal) to generate BSH. This is Putative cysteine ligase BshC from Staphylococcus aureus (strain NCTC 8325 / PS 47).